The following is a 184-amino-acid chain: MSEDKIGWHGTTILSVRRNGRVVIAGDGQVSMGNTVMKPNARKVRRLGDGSVIGGFAGATADAFTLFERLEAKLERHNGQLLRAAVELAKDWRTDKYLRNLEALMIVADDQVTLVLTGNGDVLEPVGGIAAIGSGGNFALSAARALVDYEEDAEVIARKALAVAADICVFTNDQVTIETLESRV.

T11 is a catalytic residue. A165, C168, and T171 together coordinate Na(+).

The protein belongs to the peptidase T1B family. HslV subfamily. As to quaternary structure, a double ring-shaped homohexamer of HslV is capped on each side by a ring-shaped HslU homohexamer. The assembly of the HslU/HslV complex is dependent on binding of ATP.

The protein resides in the cytoplasm. The enzyme catalyses ATP-dependent cleavage of peptide bonds with broad specificity.. Its activity is regulated as follows. Allosterically activated by HslU binding. Its function is as follows. Protease subunit of a proteasome-like degradation complex believed to be a general protein degrading machinery. This Zymomonas mobilis subsp. mobilis (strain ATCC 31821 / ZM4 / CP4) protein is ATP-dependent protease subunit HslV.